We begin with the raw amino-acid sequence, 418 residues long: UDP-N-acetylglucosamine 1-carboxyvinyltransferase (418 aa).

Lys23–Asn24 contacts phosphoenolpyruvate. Arg92 provides a ligand contact to UDP-N-acetyl-alpha-D-glucosamine. Cys116 functions as the Proton donor in the catalytic mechanism. Cys116 carries the post-translational modification 2-(S-cysteinyl)pyruvic acid O-phosphothioketal. Residues Arg121–Leu125, Lys161–Val164, Asp306, and Ile328 each bind UDP-N-acetyl-alpha-D-glucosamine.

This sequence belongs to the EPSP synthase family. MurA subfamily.

Its subcellular location is the cytoplasm. It catalyses the reaction phosphoenolpyruvate + UDP-N-acetyl-alpha-D-glucosamine = UDP-N-acetyl-3-O-(1-carboxyvinyl)-alpha-D-glucosamine + phosphate. The protein operates within cell wall biogenesis; peptidoglycan biosynthesis. Functionally, cell wall formation. Adds enolpyruvyl to UDP-N-acetylglucosamine. The protein is UDP-N-acetylglucosamine 1-carboxyvinyltransferase of Vibrio parahaemolyticus serotype O3:K6 (strain RIMD 2210633).